The chain runs to 359 residues: WW domain-binding protein wbp-11 (359 aa).

3 disordered regions span residues 1-38 (MPSI…DRQQ), 235-264 (PSSY…NPMG), and 317-341 (PGDN…QKQA). Over residues 8–27 (KSGERYRAPTDQARKMDRKK) the composition is skewed to basic and acidic residues. Positions 245–256 (MPHHHHHHHPHA) are enriched in basic residues.

In terms of biological role, activates pre-mRNA splicing. May inhibit PP1 phosphatase activity. The protein is WW domain-binding protein wbp-11 of Caenorhabditis elegans.